Here is a 429-residue protein sequence, read N- to C-terminus: Glutamate-1-semialdehyde 2,1-aminomutase (429 aa).

Lys265 bears the N6-(pyridoxal phosphate)lysine mark.

It belongs to the class-III pyridoxal-phosphate-dependent aminotransferase family. HemL subfamily. As to quaternary structure, homodimer. Requires pyridoxal 5'-phosphate as cofactor.

It is found in the cytoplasm. The enzyme catalyses (S)-4-amino-5-oxopentanoate = 5-aminolevulinate. The protein operates within porphyrin-containing compound metabolism; protoporphyrin-IX biosynthesis; 5-aminolevulinate from L-glutamyl-tRNA(Glu): step 2/2. In Shewanella halifaxensis (strain HAW-EB4), this protein is Glutamate-1-semialdehyde 2,1-aminomutase.